Consider the following 224-residue polypeptide: uncharacterized protein (224 aa).

The segment at Glu203 to Val224 is disordered. Positions Leu204–Lys214 are enriched in basic residues. Basic and acidic residues predominate over residues Pro215–Val224.

This is an uncharacterized protein from Mycoplasma genitalium (strain ATCC 33530 / DSM 19775 / NCTC 10195 / G37) (Mycoplasmoides genitalium).